Reading from the N-terminus, the 621-residue chain is Chaperone protein DnaK (621 aa).

Phosphothreonine; by autocatalysis is present on threonine 202. Positions 596–621 (SQFAQAAKQNEEKKEEDKKDSEESKN) are disordered. Basic and acidic residues predominate over residues 604-621 (QNEEKKEEDKKDSEESKN).

This sequence belongs to the heat shock protein 70 family.

Acts as a chaperone. In Malacoplasma penetrans (strain HF-2) (Mycoplasma penetrans), this protein is Chaperone protein DnaK.